The sequence spans 624 residues: DNA mismatch repair protein MutL (624 aa).

Positions 340-355 (NKLDTDSHSQSHERGH) are enriched in basic and acidic residues. Residues 340 to 415 (NKLDTDSHSQ…RGGATSSYRQ (76 aa)) are disordered. 2 stretches are compositionally biased toward polar residues: residues 372-383 (HQTAPSTKASTE) and 391-415 (SPIS…SYRQ).

It belongs to the DNA mismatch repair MutL/HexB family.

Its function is as follows. This protein is involved in the repair of mismatches in DNA. It is required for dam-dependent methyl-directed DNA mismatch repair. May act as a 'molecular matchmaker', a protein that promotes the formation of a stable complex between two or more DNA-binding proteins in an ATP-dependent manner without itself being part of a final effector complex. The chain is DNA mismatch repair protein MutL from Shewanella sediminis (strain HAW-EB3).